Consider the following 459-residue polypeptide: Bifunctional protein GlmU (459 aa).

Positions 1–229 (MSNFAIILAA…FDESLGVNDR (229 aa)) are pyrophosphorylase. Residues 8–11 (LAAG), Lys-22, Gln-72, and 77–78 (GT) contribute to the UDP-N-acetyl-alpha-D-glucosamine site. Asp-102 lines the Mg(2+) pocket. Gly-139, Glu-154, Asn-169, and Asn-227 together coordinate UDP-N-acetyl-alpha-D-glucosamine. Asn-227 lines the Mg(2+) pocket. The linker stretch occupies residues 230 to 250 (VALATAESVMRRRINHKHMVN). Residues 251–459 (GVSFVNPEAT…TRLPHHPKNQ (209 aa)) form an N-acetyltransferase region. Residues Arg-332 and Lys-350 each contribute to the UDP-N-acetyl-alpha-D-glucosamine site. Catalysis depends on His-362, which acts as the Proton acceptor. UDP-N-acetyl-alpha-D-glucosamine is bound by residues Tyr-365 and Asn-376. Acetyl-CoA contacts are provided by residues Ala-379, 385–386 (NY), Ser-404, Ala-422, and Arg-439.

It in the N-terminal section; belongs to the N-acetylglucosamine-1-phosphate uridyltransferase family. This sequence in the C-terminal section; belongs to the transferase hexapeptide repeat family. In terms of assembly, homotrimer. It depends on Mg(2+) as a cofactor.

The protein resides in the cytoplasm. It carries out the reaction alpha-D-glucosamine 1-phosphate + acetyl-CoA = N-acetyl-alpha-D-glucosamine 1-phosphate + CoA + H(+). The enzyme catalyses N-acetyl-alpha-D-glucosamine 1-phosphate + UTP + H(+) = UDP-N-acetyl-alpha-D-glucosamine + diphosphate. It functions in the pathway nucleotide-sugar biosynthesis; UDP-N-acetyl-alpha-D-glucosamine biosynthesis; N-acetyl-alpha-D-glucosamine 1-phosphate from alpha-D-glucosamine 6-phosphate (route II): step 2/2. The protein operates within nucleotide-sugar biosynthesis; UDP-N-acetyl-alpha-D-glucosamine biosynthesis; UDP-N-acetyl-alpha-D-glucosamine from N-acetyl-alpha-D-glucosamine 1-phosphate: step 1/1. Its pathway is bacterial outer membrane biogenesis; LPS lipid A biosynthesis. Catalyzes the last two sequential reactions in the de novo biosynthetic pathway for UDP-N-acetylglucosamine (UDP-GlcNAc). The C-terminal domain catalyzes the transfer of acetyl group from acetyl coenzyme A to glucosamine-1-phosphate (GlcN-1-P) to produce N-acetylglucosamine-1-phosphate (GlcNAc-1-P), which is converted into UDP-GlcNAc by the transfer of uridine 5-monophosphate (from uridine 5-triphosphate), a reaction catalyzed by the N-terminal domain. The chain is Bifunctional protein GlmU from Streptococcus pneumoniae (strain JJA).